The chain runs to 346 residues: Glycerol-3-phosphate dehydrogenase [NAD(P)+] (346 aa).

5 residues coordinate NADPH: Ser11, Trp12, His32, Arg33, and Lys106. Lys106, Gly137, and Ser139 together coordinate sn-glycerol 3-phosphate. Ala141 is an NADPH binding site. 5 residues coordinate sn-glycerol 3-phosphate: Lys193, Asp246, Ser256, Arg257, and Asn258. Catalysis depends on Lys193, which acts as the Proton acceptor. Residue Arg257 participates in NADPH binding. Positions 281 and 283 each coordinate NADPH.

It belongs to the NAD-dependent glycerol-3-phosphate dehydrogenase family.

The protein localises to the cytoplasm. It carries out the reaction sn-glycerol 3-phosphate + NAD(+) = dihydroxyacetone phosphate + NADH + H(+). The catalysed reaction is sn-glycerol 3-phosphate + NADP(+) = dihydroxyacetone phosphate + NADPH + H(+). It participates in membrane lipid metabolism; glycerophospholipid metabolism. Functionally, catalyzes the reduction of the glycolytic intermediate dihydroxyacetone phosphate (DHAP) to sn-glycerol 3-phosphate (G3P), the key precursor for phospholipid synthesis. The sequence is that of Glycerol-3-phosphate dehydrogenase [NAD(P)+] from Bacillus licheniformis (strain ATCC 14580 / DSM 13 / JCM 2505 / CCUG 7422 / NBRC 12200 / NCIMB 9375 / NCTC 10341 / NRRL NRS-1264 / Gibson 46).